The sequence spans 592 residues: Aspartate--tRNA ligase (592 aa).

Glutamate 171 contacts L-aspartate. The tract at residues 195-198 is aspartate; the sequence is QLFK. Arginine 217 contributes to the L-aspartate binding site. ATP-binding positions include 217–219 and glutamine 226; that span reads RDE. Histidine 448 provides a ligand contact to L-aspartate. Position 482 (glutamate 482) interacts with ATP. Arginine 489 contacts L-aspartate. 534-537 lines the ATP pocket; the sequence is GLDR.

The protein belongs to the class-II aminoacyl-tRNA synthetase family. Type 1 subfamily. Homodimer.

It localises to the cytoplasm. It catalyses the reaction tRNA(Asp) + L-aspartate + ATP = L-aspartyl-tRNA(Asp) + AMP + diphosphate. Functionally, catalyzes the attachment of L-aspartate to tRNA(Asp) in a two-step reaction: L-aspartate is first activated by ATP to form Asp-AMP and then transferred to the acceptor end of tRNA(Asp). The sequence is that of Aspartate--tRNA ligase from Vibrio atlanticus (strain LGP32) (Vibrio splendidus (strain Mel32)).